The chain runs to 585 residues: MTKIRVLDPDTVNQIAAGEVVERPASVVKELLENAIDADSTSILIDVSSDMAAITKIRVTDNGEGMTPEEAVLAFHPHATSKIRDIADLSAVRTLGFRGEALASIAAVAEVTLVTRPRGGGALAGTRLVVRGGEIVEKSEVGAPEGTTIAVERLFYNTPARRKFLKSRNTELAHVYAVVESLALAHGEVAFRVVHNGKERMATQRSGGALNTIAGLYGADLARSLVPVEGRLPFLAIRGYISRPSESRGNPSQISVSINGRSIASRQIAAAVREGYGTLLPKDRYPVAFLDLAIDTGLVDVNVHPTKREIRLSREREITGAIAAAVDEALAGHDLARETPVEPVQQQIIAADPGQVPTPSPVGEPGAPYTAGHRGLTLSDKQLRRTETEGGENLLPAMEPIGQVAATYIVAEGADGTLYLVDQHAAHERVLYDQVTEQRDKAAGSQELITPVVLSLPPKESAALRDAIPLLADEGFVVDEFGRDTFAVRAVPAALGAVEDPGTVRETIADLLADESRTAPDRRERVTCIVACRGAVKAGALLTPDQQKRLIMQLARTKTPWTCPHGRPTVVAFDRRRLDGMFRRG.

It belongs to the DNA mismatch repair MutL/HexB family.

Functionally, this protein is involved in the repair of mismatches in DNA. It is required for dam-dependent methyl-directed DNA mismatch repair. May act as a 'molecular matchmaker', a protein that promotes the formation of a stable complex between two or more DNA-binding proteins in an ATP-dependent manner without itself being part of a final effector complex. This chain is DNA mismatch repair protein MutL, found in Methanoculleus marisnigri (strain ATCC 35101 / DSM 1498 / JR1).